The primary structure comprises 419 residues: L-rhamnose isomerase (419 aa).

Mn(2+) is bound by residues histidine 262, aspartate 294, and aspartate 296.

This sequence belongs to the rhamnose isomerase family. Homotetramer. It depends on Mn(2+) as a cofactor.

It localises to the cytoplasm. The catalysed reaction is L-rhamnopyranose = L-rhamnulose. It participates in carbohydrate degradation; L-rhamnose degradation; glycerone phosphate from L-rhamnose: step 1/3. Its function is as follows. Catalyzes the interconversion of L-rhamnose and L-rhamnulose. The polypeptide is L-rhamnose isomerase (Salmonella typhimurium (strain LT2 / SGSC1412 / ATCC 700720)).